Here is a 177-residue protein sequence, read N- to C-terminus: Protein GrpE (177 aa).

The protein belongs to the GrpE family. In terms of assembly, homodimer.

Its subcellular location is the cytoplasm. Its function is as follows. Participates actively in the response to hyperosmotic and heat shock by preventing the aggregation of stress-denatured proteins, in association with DnaK and GrpE. It is the nucleotide exchange factor for DnaK and may function as a thermosensor. Unfolded proteins bind initially to DnaJ; upon interaction with the DnaJ-bound protein, DnaK hydrolyzes its bound ATP, resulting in the formation of a stable complex. GrpE releases ADP from DnaK; ATP binding to DnaK triggers the release of the substrate protein, thus completing the reaction cycle. Several rounds of ATP-dependent interactions between DnaJ, DnaK and GrpE are required for fully efficient folding. The chain is Protein GrpE from Thermus thermophilus (strain ATCC BAA-163 / DSM 7039 / HB27).